A 316-amino-acid chain; its full sequence is Alpha- and gamma-adaptin-binding protein p34 (316 aa).

The disordered stretch occupies residues 198 to 232; it reads ASAESCHSEQQEPSPTAERTESLPGHHSGACGSAG. Low complexity predominate over residues 222-232; sequence GHHSGACGSAG. Phosphoserine occurs at positions 311 and 312.

As to quaternary structure, associated with AP-1 and AP-2 complexes.

It localises to the cytoplasm. The protein localises to the cytosol. In terms of biological role, may be involved in endocytic recycling of growth factor receptors such as EGFR. The sequence is that of Alpha- and gamma-adaptin-binding protein p34 (Aagab) from Mus musculus (Mouse).